A 670-amino-acid polypeptide reads, in one-letter code: tRNA 5-methylaminomethyl-2-thiouridine biosynthesis bifunctional protein MnmC (670 aa).

The segment at 1-242 (MTFSVQHAEI…KRECLSGLKI (242 aa)) is tRNA (mnm(5)s(2)U34)-methyltransferase. Positions 269 to 670 (IGGGIASFCA…KKWLKGSKVE (402 aa)) are FAD-dependent cmnm(5)s(2)U34 oxidoreductase.

The protein in the N-terminal section; belongs to the methyltransferase superfamily. tRNA (mnm(5)s(2)U34)-methyltransferase family. In the C-terminal section; belongs to the DAO family. Requires FAD as cofactor.

It localises to the cytoplasm. It catalyses the reaction 5-aminomethyl-2-thiouridine(34) in tRNA + S-adenosyl-L-methionine = 5-methylaminomethyl-2-thiouridine(34) in tRNA + S-adenosyl-L-homocysteine + H(+). Catalyzes the last two steps in the biosynthesis of 5-methylaminomethyl-2-thiouridine (mnm(5)s(2)U) at the wobble position (U34) in tRNA. Catalyzes the FAD-dependent demodification of cmnm(5)s(2)U34 to nm(5)s(2)U34, followed by the transfer of a methyl group from S-adenosyl-L-methionine to nm(5)s(2)U34, to form mnm(5)s(2)U34. This is tRNA 5-methylaminomethyl-2-thiouridine biosynthesis bifunctional protein MnmC from Haemophilus influenzae (strain 86-028NP).